A 472-amino-acid polypeptide reads, in one-letter code: Glutamate--tRNA ligase 2 (472 aa).

Positions 10–20 (PSPTGYLHIGG) match the 'HIGH' region motif. Zn(2+) is bound by residues C99, C101, C126, and D128. The span at 112–130 (EQQARKEKPRYDGRCRDLD) shows a compositional bias: basic and acidic residues. The tract at residues 112–137 (EQQARKEKPRYDGRCRDLDGPPSEEV) is disordered. The 'KMSKS' region signature appears at 240–244 (RLSKR). K243 is a binding site for ATP.

It belongs to the class-I aminoacyl-tRNA synthetase family. Glutamate--tRNA ligase type 1 subfamily. As to quaternary structure, monomer. It depends on Zn(2+) as a cofactor.

Its subcellular location is the cytoplasm. The catalysed reaction is tRNA(Glu) + L-glutamate + ATP = L-glutamyl-tRNA(Glu) + AMP + diphosphate. In terms of biological role, catalyzes the attachment of glutamate to tRNA(Glu) in a two-step reaction: glutamate is first activated by ATP to form Glu-AMP and then transferred to the acceptor end of tRNA(Glu). The sequence is that of Glutamate--tRNA ligase 2 from Halorhodospira halophila (strain DSM 244 / SL1) (Ectothiorhodospira halophila (strain DSM 244 / SL1)).